A 477-amino-acid polypeptide reads, in one-letter code: Glycogen synthase (477 aa).

Lys15 lines the ADP-alpha-D-glucose pocket.

The protein belongs to the glycosyltransferase 1 family. Bacterial/plant glycogen synthase subfamily.

It carries out the reaction [(1-&gt;4)-alpha-D-glucosyl](n) + ADP-alpha-D-glucose = [(1-&gt;4)-alpha-D-glucosyl](n+1) + ADP + H(+). The protein operates within glycan biosynthesis; glycogen biosynthesis. Synthesizes alpha-1,4-glucan chains using ADP-glucose. The protein is Glycogen synthase of Anaeromyxobacter dehalogenans (strain 2CP-1 / ATCC BAA-258).